Consider the following 185-residue polypeptide: Calcium and integrin-binding family member 4 (185 aa).

EF-hand domains lie at 62-95, 97-132, and 138-174; these read RVNP…FSEQ, CPSL…LLKS, and DLLM…SPDF. 4 residues coordinate Ca(2+): aspartate 110, asparagine 112, asparagine 114, and aspartate 121.

Interacts with ITGA2B (via C-terminus cytoplasmic tail region); the interaction is stabilized/increased in a calcium- and magnesium-dependent manner. As to expression, expressed weakly in megakaryocytes and endothelial cells.

The chain is Calcium and integrin-binding family member 4 (Cib4) from Mus musculus (Mouse).